Here is a 208-residue protein sequence, read N- to C-terminus: Small ribosomal subunit protein uS4 (208 aa).

One can recognise an S4 RNA-binding domain in the interval 98–160 (RRLDNVVYRL…SKSKTRFVEI (63 aa)).

The protein belongs to the universal ribosomal protein uS4 family. In terms of assembly, part of the 30S ribosomal subunit. Contacts protein S5. The interaction surface between S4 and S5 is involved in control of translational fidelity.

Functionally, one of the primary rRNA binding proteins, it binds directly to 16S rRNA where it nucleates assembly of the body of the 30S subunit. With S5 and S12 plays an important role in translational accuracy. The protein is Small ribosomal subunit protein uS4 of Caldicellulosiruptor bescii (strain ATCC BAA-1888 / DSM 6725 / KCTC 15123 / Z-1320) (Anaerocellum thermophilum).